The chain runs to 239 residues: 2,3,4,5-tetrahydropyridine-2,6-dicarboxylate N-acetyltransferase (239 aa).

Belongs to the transferase hexapeptide repeat family. DapH subfamily.

The enzyme catalyses (S)-2,3,4,5-tetrahydrodipicolinate + acetyl-CoA + H2O = L-2-acetamido-6-oxoheptanedioate + CoA. Its pathway is amino-acid biosynthesis; L-lysine biosynthesis via DAP pathway; LL-2,6-diaminopimelate from (S)-tetrahydrodipicolinate (acetylase route): step 1/3. Functionally, catalyzes the transfer of an acetyl group from acetyl-CoA to tetrahydrodipicolinate. The sequence is that of 2,3,4,5-tetrahydropyridine-2,6-dicarboxylate N-acetyltransferase from Staphylococcus saprophyticus subsp. saprophyticus (strain ATCC 15305 / DSM 20229 / NCIMB 8711 / NCTC 7292 / S-41).